The chain runs to 157 residues: SsrA-binding protein (157 aa).

Belongs to the SmpB family.

It is found in the cytoplasm. Required for rescue of stalled ribosomes mediated by trans-translation. Binds to transfer-messenger RNA (tmRNA), required for stable association of tmRNA with ribosomes. tmRNA and SmpB together mimic tRNA shape, replacing the anticodon stem-loop with SmpB. tmRNA is encoded by the ssrA gene; the 2 termini fold to resemble tRNA(Ala) and it encodes a 'tag peptide', a short internal open reading frame. During trans-translation Ala-aminoacylated tmRNA acts like a tRNA, entering the A-site of stalled ribosomes, displacing the stalled mRNA. The ribosome then switches to translate the ORF on the tmRNA; the nascent peptide is terminated with the 'tag peptide' encoded by the tmRNA and targeted for degradation. The ribosome is freed to recommence translation, which seems to be the essential function of trans-translation. In Methylobacterium nodulans (strain LMG 21967 / CNCM I-2342 / ORS 2060), this protein is SsrA-binding protein.